The sequence spans 163 residues: Campylobacter invasion antigen D (163 aa).

Positions 135-145 match the MKD motif; sequence KKDDLENRLNL.

Interacts with the host cell protein IQGAP1, thus displacing RACGAP1 from the IQGAP1 complex.

The protein localises to the secreted. Its subcellular location is the host cytoplasm. The protein resides in the host cytosol. Its function is as follows. Effector protein required for the development of acute disease and colon inflammatory lesions. Required for maximal host cell invasion and maximal secretion of the inflammatory chemokine interleukin-8 (IL-8) from host cells. Acts by activating the host MAP kinase signaling pathways ERK-1/2 and p38 to promote both cellular invasion and the release of IL-8. CiaD mediated activation of ERK-1/2 leads to the phosphorylation of host cortactin (CTTN) on serine residues and association of cortactin with N-WASP, promoting actin cytoskeleton rearrangement, membrane ruffling and host cell invasion. In addition, maximal host cell invasion requires interaction with the host cell protein IQGAP1, a Ras GTPase-activating-like protein. Binding to IQGAP1 facilitates the activation of the Rho GTPases RAC1 and CDC42, further promoting actin reorganization and bacterial uptake. CiaD promotes RAC1 activation by excluding RACGAP1 from the IQGAP1 complex, preventing the deactivation of RAC1. CiaD probably activates ERK signaling upstream or independently of IQGAP1. This Campylobacter jejuni subsp. jejuni serotype O:2 (strain ATCC 700819 / NCTC 11168) protein is Campylobacter invasion antigen D.